The following is a 120-amino-acid chain: Small ribosomal subunit protein uS13 (120 aa).

The disordered stretch occupies residues 93-120 (RRGLPCRGQKTKTNARTRKGKRKTVGAA).

The protein belongs to the universal ribosomal protein uS13 family. As to quaternary structure, part of the 30S ribosomal subunit. Forms a loose heterodimer with protein S19. Forms two bridges to the 50S subunit in the 70S ribosome.

In terms of biological role, located at the top of the head of the 30S subunit, it contacts several helices of the 16S rRNA. In the 70S ribosome it contacts the 23S rRNA (bridge B1a) and protein L5 of the 50S subunit (bridge B1b), connecting the 2 subunits; these bridges are implicated in subunit movement. Contacts the tRNAs in the A and P-sites. This Sulfurimonas denitrificans (strain ATCC 33889 / DSM 1251) (Thiomicrospira denitrificans (strain ATCC 33889 / DSM 1251)) protein is Small ribosomal subunit protein uS13.